Reading from the N-terminus, the 423-residue chain is Serine--tRNA ligase (423 aa).

Residue 231–233 (TAE) participates in L-serine binding. 262-264 (RSE) contributes to the ATP binding site. Glu285 serves as a coordination point for L-serine. 349–352 (EISS) lines the ATP pocket. Ser384 contributes to the L-serine binding site.

It belongs to the class-II aminoacyl-tRNA synthetase family. Type-1 seryl-tRNA synthetase subfamily. In terms of assembly, homodimer. The tRNA molecule binds across the dimer.

Its subcellular location is the cytoplasm. The enzyme catalyses tRNA(Ser) + L-serine + ATP = L-seryl-tRNA(Ser) + AMP + diphosphate + H(+). The catalysed reaction is tRNA(Sec) + L-serine + ATP = L-seryl-tRNA(Sec) + AMP + diphosphate + H(+). The protein operates within aminoacyl-tRNA biosynthesis; selenocysteinyl-tRNA(Sec) biosynthesis; L-seryl-tRNA(Sec) from L-serine and tRNA(Sec): step 1/1. Functionally, catalyzes the attachment of serine to tRNA(Ser). Is also able to aminoacylate tRNA(Sec) with serine, to form the misacylated tRNA L-seryl-tRNA(Sec), which will be further converted into selenocysteinyl-tRNA(Sec). The chain is Serine--tRNA ligase from Acinetobacter baumannii (strain AB307-0294).